A 256-amino-acid chain; its full sequence is Acetyl-coenzyme A carboxylase carboxyl transferase subunit alpha (256 aa).

A CoA carboxyltransferase C-terminal domain is found at 1–236; sequence MTKITRIVRE…KQELLVELEQ (236 aa).

It belongs to the AccA family. Acetyl-CoA carboxylase is a heterohexamer composed of biotin carboxyl carrier protein (AccB), biotin carboxylase (AccC) and two subunits each of ACCase subunit alpha (AccA) and ACCase subunit beta (AccD).

It is found in the cytoplasm. It catalyses the reaction N(6)-carboxybiotinyl-L-lysyl-[protein] + acetyl-CoA = N(6)-biotinyl-L-lysyl-[protein] + malonyl-CoA. It functions in the pathway lipid metabolism; malonyl-CoA biosynthesis; malonyl-CoA from acetyl-CoA: step 1/1. Functionally, component of the acetyl coenzyme A carboxylase (ACC) complex. First, biotin carboxylase catalyzes the carboxylation of biotin on its carrier protein (BCCP) and then the CO(2) group is transferred by the carboxyltransferase to acetyl-CoA to form malonyl-CoA. In Streptococcus gordonii (strain Challis / ATCC 35105 / BCRC 15272 / CH1 / DL1 / V288), this protein is Acetyl-coenzyme A carboxylase carboxyl transferase subunit alpha.